Consider the following 326-residue polypeptide: tRNA-dihydrouridine(20/20a) synthase (326 aa).

FMN contacts are provided by residues 11–13 (PML) and glutamine 63. Catalysis depends on cysteine 93, which acts as the Proton donor. Residues lysine 132, histidine 165, 205-207 (NGG), and 227-228 (GR) each bind FMN.

The protein belongs to the Dus family. DusA subfamily. Requires FMN as cofactor.

It carries out the reaction 5,6-dihydrouridine(20) in tRNA + NADP(+) = uridine(20) in tRNA + NADPH + H(+). It catalyses the reaction 5,6-dihydrouridine(20) in tRNA + NAD(+) = uridine(20) in tRNA + NADH + H(+). The catalysed reaction is 5,6-dihydrouridine(20a) in tRNA + NADP(+) = uridine(20a) in tRNA + NADPH + H(+). The enzyme catalyses 5,6-dihydrouridine(20a) in tRNA + NAD(+) = uridine(20a) in tRNA + NADH + H(+). Its function is as follows. Catalyzes the synthesis of 5,6-dihydrouridine (D), a modified base found in the D-loop of most tRNAs, via the reduction of the C5-C6 double bond in target uridines. Specifically modifies U20 and U20a in tRNAs. In Vibrio vulnificus (strain CMCP6), this protein is tRNA-dihydrouridine(20/20a) synthase.